We begin with the raw amino-acid sequence, 267 residues long: 2-keto-3-deoxy-L-rhamnonate aldolase (267 aa).

Residue His-49 is the Proton acceptor of the active site. A substrate-binding site is contributed by Gln-151. Glu-153 contributes to the Mg(2+) binding site. Residues Ala-178 and Asp-179 each coordinate substrate. Asp-179 provides a ligand contact to Mg(2+).

This sequence belongs to the HpcH/HpaI aldolase family. KDR aldolase subfamily. In terms of assembly, homohexamer. Mg(2+) serves as cofactor.

The enzyme catalyses 2-dehydro-3-deoxy-L-rhamnonate = (S)-lactaldehyde + pyruvate. Its function is as follows. Catalyzes the reversible retro-aldol cleavage of 2-keto-3-deoxy-L-rhamnonate (KDR) to pyruvate and lactaldehyde. The chain is 2-keto-3-deoxy-L-rhamnonate aldolase from Escherichia coli O17:K52:H18 (strain UMN026 / ExPEC).